A 161-amino-acid polypeptide reads, in one-letter code: Nucleotide-binding protein ABO_0048 (161 aa).

The protein belongs to the YajQ family.

Functionally, nucleotide-binding protein. The sequence is that of Nucleotide-binding protein ABO_0048 from Alcanivorax borkumensis (strain ATCC 700651 / DSM 11573 / NCIMB 13689 / SK2).